A 269-amino-acid chain; its full sequence is Phosphonates import ATP-binding protein PhnC (269 aa).

The region spanning 2–245 (LVVEGLTCRF…VARELYDLEA (244 aa)) is the ABC transporter domain. 34-41 (GRSGAGKS) lines the ATP pocket.

This sequence belongs to the ABC transporter superfamily. Phosphonates importer (TC 3.A.1.9.1) family. As to quaternary structure, the complex is composed of two ATP-binding proteins (PhnC), two transmembrane proteins (PhnE) and a solute-binding protein (PhnD).

It localises to the cell inner membrane. It carries out the reaction phosphonate(out) + ATP + H2O = phosphonate(in) + ADP + phosphate + H(+). Functionally, part of the ABC transporter complex PhnCDE involved in phosphonates import. Responsible for energy coupling to the transport system. The protein is Phosphonates import ATP-binding protein PhnC of Bradyrhizobium diazoefficiens (strain JCM 10833 / BCRC 13528 / IAM 13628 / NBRC 14792 / USDA 110).